The chain runs to 571 residues: uncharacterized protein (571 aa).

The next 5 membrane-spanning stretches (helical) occupy residues 10–29, 36–55, 65–87, 96–118, and 166–188; these read VRLH…HFIG, VSLG…GLLF, WAFF…FASL, ALAV…LFRF, and ATTY…PRLL. In terms of domain architecture, RCK C-terminal spans 294–378; sequence TEVDDQELLS…IATAARNLGF (85 aa). The next 6 membrane-spanning stretches (helical) occupy residues 388 to 406, 411 to 433, 446 to 465, 480 to 502, 509 to 531, and 546 to 568; these read LVYL…LLQV, VPLG…WLYS, LRLL…GLAA, LFAK…GLLL, LPPI…LNAL, and VPFA…CAVA.

The protein belongs to the AAE transporter (TC 2.A.81) family.

The protein localises to the cell membrane. This is an uncharacterized protein from Bordetella bronchiseptica (strain ATCC BAA-588 / NCTC 13252 / RB50) (Alcaligenes bronchisepticus).